The primary structure comprises 449 residues: MKFTQRLSLRVRLTLIFLILASVTWLLSSFVAWKQTTDNVDELFDTQLMLFAKRLSTLDLNEINAADRMAQTPNKLKHGHVDDDALTFAIFTHDGRMVLNDGDNGEDIPYSYQREGFADGQLVGDKDQWRFVWMTSPDGKYRIVVGQEWEYREDMALAIVAGQLIPWLVALPVMLIIMMVLLGRELAPLNKLALALRMRDPDSEKPLNATGVPSEVRPLVESLNQLFARTHAMMVRERRFTSDAAHELRSPLTALKVQTEVAQLSDDDPQARKKALLQLHSGIDRATRLVDQLLTLSRLDSLDNLQDVAEIPLEDLLQSSVMDIYHTAQQAKIDVRLTLNVQGIKRTGQPLLLSLLVRNLLDNAVRYSPQGSVVDVTLNADNFIVRDNGPGVTPEALARIGERFYRPPGQTATGSGLGLSIVQRIAKLHGMNVEFGNAEQGGFEAKVSW.

The Cytoplasmic segment spans residues 1–12 (MKFTQRLSLRVR). The chain crosses the membrane as a helical span at residues 13–33 (LTLIFLILASVTWLLSSFVAW). Residues 34 to 156 (KQTTDNVDEL…QEWEYREDMA (123 aa)) lie on the Periplasmic side of the membrane. The chain crosses the membrane as a helical span at residues 157–177 (LAIVAGQLIPWLVALPVMLII). The Cytoplasmic portion of the chain corresponds to 178–449 (MMVLLGRELA…QGGFEAKVSW (272 aa)). A Histidine kinase domain is found at 243–449 (DAAHELRSPL…QGGFEAKVSW (207 aa)). Residue His246 is modified to Phosphohistidine; by autocatalysis.

Its subcellular location is the cell inner membrane. It carries out the reaction ATP + protein L-histidine = ADP + protein N-phospho-L-histidine.. Member of a two-component regulatory system QseB/QseC. Activates the flagella regulon by activating transcription of FlhDC. May activate QseB by phosphorylation. The chain is Sensor protein QseC (qseC) from Escherichia coli O157:H7.